A 270-amino-acid chain; its full sequence is Carboxy-S-adenosyl-L-methionine synthase (270 aa).

S-adenosyl-L-methionine contacts are provided by residues Y65, 90 to 92, 143 to 144, N158, and R225; these read GCS and DI.

It belongs to the class I-like SAM-binding methyltransferase superfamily. Cx-SAM synthase family. In terms of assembly, homodimer.

The catalysed reaction is prephenate + S-adenosyl-L-methionine = carboxy-S-adenosyl-L-methionine + 3-phenylpyruvate + H2O. Functionally, catalyzes the conversion of S-adenosyl-L-methionine (SAM) to carboxy-S-adenosyl-L-methionine (Cx-SAM). The protein is Carboxy-S-adenosyl-L-methionine synthase of Chromohalobacter salexigens (strain ATCC BAA-138 / DSM 3043 / CIP 106854 / NCIMB 13768 / 1H11).